We begin with the raw amino-acid sequence, 81 residues long: Exodeoxyribonuclease 7 small subunit (81 aa).

Belongs to the XseB family. In terms of assembly, heterooligomer composed of large and small subunits.

The protein localises to the cytoplasm. It carries out the reaction Exonucleolytic cleavage in either 5'- to 3'- or 3'- to 5'-direction to yield nucleoside 5'-phosphates.. In terms of biological role, bidirectionally degrades single-stranded DNA into large acid-insoluble oligonucleotides, which are then degraded further into small acid-soluble oligonucleotides. The chain is Exodeoxyribonuclease 7 small subunit from Pseudomonas syringae pv. syringae (strain B728a).